A 148-amino-acid chain; its full sequence is Small ribosomal subunit protein uS7c (148 aa).

Belongs to the universal ribosomal protein uS7 family. Part of the 30S ribosomal subunit.

The protein localises to the plastid. It is found in the chloroplast. In terms of biological role, one of the primary rRNA binding proteins, it binds directly to 16S rRNA where it nucleates assembly of the head domain of the 30S subunit. The polypeptide is Small ribosomal subunit protein uS7c (rps7) (Cyanidioschyzon merolae (strain NIES-3377 / 10D) (Unicellular red alga)).